The primary structure comprises 204 residues: Guanylate kinase (204 aa).

One can recognise a Guanylate kinase-like domain in the interval 1 to 182; the sequence is MLYIISAPSG…ALSDLNTIIC (182 aa). 7–14 lines the ATP pocket; that stretch reads APSGTGKS.

Belongs to the guanylate kinase family.

It is found in the cytoplasm. It catalyses the reaction GMP + ATP = GDP + ADP. Essential for recycling GMP and indirectly, cGMP. The polypeptide is Guanylate kinase (Baumannia cicadellinicola subsp. Homalodisca coagulata).